The sequence spans 307 residues: Cyclooctat-9-en-7-ol synthase (307 aa).

Residues aspartate 110, asparagine 220, serine 224, and glutamate 228 each contribute to the Mg(2+) site. Residues aspartate 110–aspartate 113 carry the DDXXD motif; degenerate motif. The short motif at asparagine 220–glutamate 228 is the NSE/DTE motif element.

The protein belongs to the terpene synthase family. As to quaternary structure, homodimer. The cofactor is Mg(2+).

It catalyses the reaction geranylgeranyl diphosphate + H2O = cyclooctat-9-en-7-ol + diphosphate. In terms of biological role, catalyzes the cyclization of the linear isoprenoid intermediate geranylgeranyl diphosphate to tricycclic cyclooctat-9-en-7-ol in the cyclooctatin biosynthesis pathway. Cyclooctatin is a potent inhibitor of lysophospholipase. This Streptomyces melanosporofaciens protein is Cyclooctat-9-en-7-ol synthase.